Here is a 431-residue protein sequence, read N- to C-terminus: Homeobox protein knotted-1-like 3 (431 aa).

Positions 15–47 (NHFTDQHQPPPPQPPPPPPQQQQHFQEAPPPNW) are disordered. Residues 22–34 (QPPPPQPPPPPPQ) are compositionally biased toward pro residues. The region spanning 322 to 342 (ELKHELKQGYKEKIVDIREEI) is the ELK domain. The segment at residues 343–406 (LRKRRAGKLP…NQRKRNWHSN (64 aa)) is a DNA-binding region (homeobox; TALE-type). The tract at residues 402–431 (NWHSNPSSSTVLKNKRKSNAGDNSGRERFA) is disordered. Residues 404–413 (HSNPSSSTVL) show a composition bias toward polar residues.

It belongs to the TALE/KNOX homeobox family. As to quaternary structure, may form heterodimeric complex with the TALE/BELL proteins. Interacts with OFP1, OFP2, OFP4, OFP12 and OFP14. Interacts with KNATM-B.

Its subcellular location is the nucleus. This chain is Homeobox protein knotted-1-like 3 (KNAT3), found in Arabidopsis thaliana (Mouse-ear cress).